The following is a 777-amino-acid chain: Intraflagellar transport protein 80 homolog (777 aa).

WD repeat units lie at residues 12–50, 104–143, 145–185, 186–225, 227–265, 267–306, and 504–542; these read KHQE…TSLI, AHCG…RSTL, QQGI…LQWK, AHDG…LYGS, PHEH…YALE, PNTG…WEWK, and KLGT…YVDR. A disordered region spans residues 758-777; it reads TKERDRSSSGQSSKNTGLKP. A compositionally biased stretch (polar residues) spans 765–777; the sequence is SSGQSSKNTGLKP.

Component of the IFT complex B, at least composed of IFT20, IFT22, IFT25, IFT27, IFT46, IFT52, TRAF3IP1/IFT54, IFT57, IFT74, IFT80, IFT81, and IFT88. Interacts with IFT88. Interacts with IFT57 and IFT70B.

The protein resides in the cytoplasm. Its subcellular location is the cytoskeleton. It is found in the cilium basal body. It localises to the cilium axoneme. Its function is as follows. Component of the intraflagellar transport (IFT) complex B, which is essential for the development and maintenance of motile and sensory cilia. The sequence is that of Intraflagellar transport protein 80 homolog (Ift80) from Rattus norvegicus (Rat).